Reading from the N-terminus, the 126-residue chain is Topoisomerase I damage affected protein 8 (126 aa).

The 110-residue stretch at 1 to 110 (MTGYFLPPQT…VTTVSDDFAG (110 aa)) folds into the PA14 domain.

This sequence belongs to the flocculin family.

This Saccharomyces cerevisiae (strain ATCC 204508 / S288c) (Baker's yeast) protein is Topoisomerase I damage affected protein 8 (TDA8).